We begin with the raw amino-acid sequence, 231 residues long: Protein OPG061 (231 aa).

It belongs to the orthopoxvirus OPG058 family.

It localises to the host nucleus. The protein localises to the host nucleolus. This Cynomys gunnisoni (Gunnison's prairie dog) protein is Protein OPG061 (OPG061).